Reading from the N-terminus, the 449-residue chain is Adenylosuccinate synthetase isozyme 1 B (449 aa).

Residues 34–40 (GDEGKGK) and 62–64 (GHT) contribute to the GTP site. Aspartate 35 (proton acceptor) is an active-site residue. Positions 35 and 62 each coordinate Mg(2+). Aspartate 35 contributes to the substrate binding site. IMP contacts are provided by residues 35–38 (DEGK), 60–63 (NAGH), threonine 155, arginine 169, asparagine 248, threonine 263, and arginine 327. Catalysis depends on histidine 63, which acts as the Proton donor. 323-329 (VTTGRKR) is a binding site for substrate. Residues arginine 329, 355 to 357 (KLD), and 437 to 440 (GVGK) contribute to the GTP site.

Belongs to the adenylosuccinate synthetase family. In terms of assembly, homodimer. The cofactor is Mg(2+).

Its subcellular location is the cytoplasm. The enzyme catalyses IMP + L-aspartate + GTP = N(6)-(1,2-dicarboxyethyl)-AMP + GDP + phosphate + 2 H(+). The protein operates within purine metabolism; AMP biosynthesis via de novo pathway; AMP from IMP: step 1/2. In terms of biological role, component of the purine nucleotide cycle (PNC), which interconverts IMP and AMP to regulate the nucleotide levels in various tissues, and which contributes to glycolysis and ammoniagenesis. Catalyzes the first committed step in the biosynthesis of AMP from IMP. This chain is Adenylosuccinate synthetase isozyme 1 B (adss1b), found in Salmo salar (Atlantic salmon).